A 499-amino-acid chain; its full sequence is NAD(P)H-quinone oxidoreductase chain 4, chloroplastic (499 aa).

Transmembrane regions (helical) follow at residues 4-24 (LPWL…IPLF), 31-51 (MIRW…TYIF), 87-107 (IGLI…AWPV), 113-130 (LLHF…GLFA), 134-154 (ILLF…LLSM), 167-187 (FLLY…SMGL), 211-231 (ILLY…FPLH), 242-262 (HYST…YGLI), 274-294 (SLFS…AALT), 305-325 (IAYS…SMTY), 330-350 (GAIL…FLVG), 386-406 (LALP…GVIT), 416-436 (IIIT…LLSM), and 462-482 (LFIL…PDLV).

It belongs to the complex I subunit 4 family.

The protein localises to the plastid. Its subcellular location is the chloroplast thylakoid membrane. The enzyme catalyses a plastoquinone + NADH + (n+1) H(+)(in) = a plastoquinol + NAD(+) + n H(+)(out). The catalysed reaction is a plastoquinone + NADPH + (n+1) H(+)(in) = a plastoquinol + NADP(+) + n H(+)(out). This Cryptomeria japonica (Japanese cedar) protein is NAD(P)H-quinone oxidoreductase chain 4, chloroplastic.